The primary structure comprises 255 residues: Hydroxyacylglutathione hydrolase (255 aa).

Zn(2+) contacts are provided by H59, H61, D63, H64, H118, D144, and H182.

It belongs to the metallo-beta-lactamase superfamily. Glyoxalase II family. In terms of assembly, monomer. Zn(2+) is required as a cofactor.

It catalyses the reaction an S-(2-hydroxyacyl)glutathione + H2O = a 2-hydroxy carboxylate + glutathione + H(+). It functions in the pathway secondary metabolite metabolism; methylglyoxal degradation; (R)-lactate from methylglyoxal: step 2/2. Thiolesterase that catalyzes the hydrolysis of S-D-lactoyl-glutathione to form glutathione and D-lactic acid. The chain is Hydroxyacylglutathione hydrolase from Synechococcus sp. (strain WH7803).